We begin with the raw amino-acid sequence, 271 residues long: Enolase-phosphatase E1 (271 aa).

Positions 16 and 18 each coordinate Mg(2+). Substrate-binding positions include 150-151 and K199; that span reads SS. D226 contributes to the Mg(2+) binding site.

Belongs to the HAD-like hydrolase superfamily. MasA/MtnC family. In terms of assembly, monomer. Mg(2+) is required as a cofactor.

The protein localises to the cytoplasm. The protein resides in the nucleus. The enzyme catalyses 5-methylsulfanyl-2,3-dioxopentyl phosphate + H2O = 1,2-dihydroxy-5-(methylsulfanyl)pent-1-en-3-one + phosphate. It functions in the pathway amino-acid biosynthesis; L-methionine biosynthesis via salvage pathway; L-methionine from S-methyl-5-thio-alpha-D-ribose 1-phosphate: step 3/6. It participates in amino-acid biosynthesis; L-methionine biosynthesis via salvage pathway; L-methionine from S-methyl-5-thio-alpha-D-ribose 1-phosphate: step 4/6. In terms of biological role, bifunctional enzyme that catalyzes the enolization of 2,3-diketo-5-methylthiopentyl-1-phosphate (DK-MTP-1-P) into the intermediate 2-hydroxy-3-keto-5-methylthiopentenyl-1-phosphate (HK-MTPenyl-1-P), which is then dephosphorylated to form the acireductone 1,2-dihydroxy-3-keto-5-methylthiopentene (DHK-MTPene). In Candida dubliniensis (strain CD36 / ATCC MYA-646 / CBS 7987 / NCPF 3949 / NRRL Y-17841) (Yeast), this protein is Enolase-phosphatase E1.